Consider the following 280-residue polypeptide: Pantothenate synthetase (280 aa).

31–38 (MGNLHVGH) contributes to the ATP binding site. The Proton donor role is filled by H38. Q62 contributes to the (R)-pantoate binding site. Beta-alanine is bound at residue Q62. Residue 150–153 (GKKD) participates in ATP binding. Q156 serves as a coordination point for (R)-pantoate. Residues V179 and 187–190 (MSSR) contribute to the ATP site.

Belongs to the pantothenate synthetase family. As to quaternary structure, homodimer.

Its subcellular location is the cytoplasm. The enzyme catalyses (R)-pantoate + beta-alanine + ATP = (R)-pantothenate + AMP + diphosphate + H(+). It participates in cofactor biosynthesis; (R)-pantothenate biosynthesis; (R)-pantothenate from (R)-pantoate and beta-alanine: step 1/1. Its function is as follows. Catalyzes the condensation of pantoate with beta-alanine in an ATP-dependent reaction via a pantoyl-adenylate intermediate. This Xanthomonas oryzae pv. oryzae (strain KACC10331 / KXO85) protein is Pantothenate synthetase.